We begin with the raw amino-acid sequence, 264 residues long: S-adenosylmethionine decarboxylase proenzyme (264 aa).

Serine 112 functions as the Schiff-base intermediate with substrate; via pyruvic acid in the catalytic mechanism. Serine 112 carries the post-translational modification Pyruvic acid (Ser); by autocatalysis. The Proton acceptor; for processing activity role is filled by histidine 117. Residue cysteine 140 is the Proton donor; for catalytic activity of the active site.

The protein belongs to the prokaryotic AdoMetDC family. Type 2 subfamily. As to quaternary structure, heterooctamer of four alpha and four beta chains arranged as a tetramer of alpha/beta heterodimers. The cofactor is pyruvate. Is synthesized initially as an inactive proenzyme. Formation of the active enzyme involves a self-maturation process in which the active site pyruvoyl group is generated from an internal serine residue via an autocatalytic post-translational modification. Two non-identical subunits are generated from the proenzyme in this reaction, and the pyruvate is formed at the N-terminus of the alpha chain, which is derived from the carboxyl end of the proenzyme. The post-translation cleavage follows an unusual pathway, termed non-hydrolytic serinolysis, in which the side chain hydroxyl group of the serine supplies its oxygen atom to form the C-terminus of the beta chain, while the remainder of the serine residue undergoes an oxidative deamination to produce ammonia and the pyruvoyl group blocking the N-terminus of the alpha chain.

It carries out the reaction S-adenosyl-L-methionine + H(+) = S-adenosyl 3-(methylsulfanyl)propylamine + CO2. Its pathway is amine and polyamine biosynthesis; S-adenosylmethioninamine biosynthesis; S-adenosylmethioninamine from S-adenosyl-L-methionine: step 1/1. Catalyzes the decarboxylation of S-adenosylmethionine to S-adenosylmethioninamine (dcAdoMet), the propylamine donor required for the synthesis of the polyamines spermine and spermidine from the diamine putrescine. This is S-adenosylmethionine decarboxylase proenzyme from Serratia proteamaculans (strain 568).